We begin with the raw amino-acid sequence, 5251 residues long: Dynein heavy chain-like protein 2 (5251 aa).

Kelch repeat units follow at residues 37–87 (GLFL…CYHN), 95–143 (YVII…LQNG), 266–317 (SLIL…IHGN), 318–367 (NLFI…LVES), and 372–421 (IIFI…QNNE). The segment at 140–188 (LQNGINGTNEKGYISQTDDENCSDNKYGENQDYGSNDSDSKDGEDIDKD) is disordered. The segment at 686 to 732 (NNIEQRNNNNDNNDNNNNDNNNNNNNDNNNNNNNNNNNNNNNNDNLN) is disordered. Residues 692-730 (NNNNDNNDNNNNDNNNNNNNDNNNNNNNNNNNNNNNNDN) are compositionally biased toward low complexity. Coiled-coil stretches lie at residues 1155–1225 (DNII…KKIK) and 1544–1610 (KLNN…KLIS). A disordered region spans residues 1554–1598 (EKNKNANENSNEIETNKYNKKEELTNNRDGDGDDDDNIKNDKDEK). The segment covering 1567–1583 (ETNKYNKKEELTNNRDG) has biased composition (basic and acidic residues). The Kelch 6 repeat unit spans residues 1639 to 1685 (HIKYTLKYYITNLFRLKDLFNNEKEKWIDENYLAQVFILCNTIFFVN). The interval 1802–1825 (HQEGKQEYNNKNNDNDNNNNNNNN) is disordered. Residues 1810-1825 (NNKNNDNDNNNNNNNN) are compositionally biased toward low complexity. Residue 1895–1902 (GPAGTGKT) coordinates ATP. A coiled-coil region spans residues 2136–2188 (NDINENKKEKDNIEELKSDNVKEEKKTKKKHLEDNNNNKKKELFNLNNIEKEL). A disordered region spans residues 2152–2171 (KSDNVKEEKKTKKKHLEDNN). 2224 to 2231 (GEAGCGKT) is an ATP binding site. The stretch at 2447–2494 (VIWCFGGFLGEKDNVNYKKSFDKYWKNTFKSIKVNRKISVFDFYVENN) is one Kelch 7 repeat. Residues 2546–2553 (GKTGVGKT) and 2890–2897 (GIGGCGKT) each bind ATP. Composition is skewed to low complexity over residues 3138–3154 (DNNNNNNNNRDNIDGNN) and 3652–3671 (DQNFINNNNNNNSSNNNSTN). Disordered stretches follow at residues 3138–3163 (DNNNNNNNNRDNIDGNNFFKNREGND), 3652–3686 (DQNFINNNNNNNSSNNNSTNFGYNEDPQKKDNHNN), 4042–4250 (EDND…EENV), 4280–4299 (NGKIDKDKEDDLEEEEDFEN), 4773–4824 (MDFH…ENEE), and 4910–4948 (KIIKKEKPGDNKDNKYTHDQKKETIHKEEDDEDEKHSGS). Positions 4059–4086 (KMEDEEKMEEEKVDEEKMEEEKVDEEKM) are enriched in acidic residues. The segment covering 4087-4247 (EDEKVEEKME…EKGEEQKAEE (161 aa)) has biased composition (basic and acidic residues). Composition is skewed to acidic residues over residues 4289–4299 (DDLEEEEDFEN) and 4807–4823 (DDDDESNNSNDNEEENE). Basic and acidic residues predominate over residues 4912 to 4937 (IKKEKPGDNKDNKYTHDQKKETIHKE).

This sequence belongs to the dynein heavy chain family. Consists of at least two heavy chains and a number of intermediate and light chains.

It is found in the cytoplasm. The protein resides in the cytoskeleton. Functionally, acts as a motor for the intracellular retrograde motility of vesicles and organelles along microtubules. Dynein has ATPase activity; the force-producing power stroke is thought to occur on release of ADP. This is Dynein heavy chain-like protein 2 from Plasmodium falciparum (isolate 3D7).